A 585-amino-acid chain; its full sequence is Pre-hexon-linking protein IIIa (585 aa).

A disordered region spans residues 1–24; it reads MMQDATDPAVRAALQSQPSGLNST. The segment at 1 to 106 is peripentonal hexon-tethering domain; it reads MMQDATDPAV…ALLQRVARYN (106 aa). Polar residues predominate over residues 14-24; sequence LQSQPSGLNST. Residues 138–251 form a binding to hexon-linking protein region; it reads GSMVALNAFL…FTDSGSVSRD (114 aa). A Phosphoserine; by host modification is found at Ser225. Thr274 is modified (phosphothreonine; by host). 7 positions are modified to phosphoserine; by host: Ser310, Ser444, Ser449, Ser450, Ser452, Ser469, and Ser473. The tract at residues 438 to 475 is disordered; it reads AALRKESFRRPSSLSDLGAAAPRSDASSPFPSLIGSFT. Positions 462–475 are enriched in polar residues; the sequence is DASSPFPSLIGSFT. Phosphotyrosine; by host is present on Tyr490. A phosphoserine; by host mark is found at Ser494 and Ser515. The tract at residues 528 to 573 is disordered; that stretch reads QEHRDVPGPRPPTRRQRHDRQRGLVWEDDDSADDSSVLDLGGSGNP. Positions 571–585 are excised as a propeptide; the sequence is GNPFAHLRPRLGRMF.

It belongs to the adenoviridae hexon-linking protein IIIa family. Interacts with hexon proteins; this interaction tethers the peripentonal hexons to hexons situated in the facet. Interacts with the penton protein (via N-terminus). Interacts with packaging protein 3; this interaction is required to promote correct genome packaging. In terms of processing, cleaved near the C-terminus by the viral protease during virion maturation to form the mature protein.

It is found in the virion. Its subcellular location is the host nucleus. Its function is as follows. Structural component of the virion that acts as a cement protein on the capsid exterior which mediates the interactions between the hexons, including the peripentonal hexons, and reaches all the way to the penton vertices. Two hexon linking proteins IIIa, one from each facet, stabilize the unique edge interface between a pair of facets. As the virus enters the host cell, hexon linking proteins IIIa are shed concomitant with virion acidification in the endosome. During virus assembly, seems to play a role in the serotype specificity of the packaging of viral DNA via its interaction with packaging protein 3. In Human adenovirus C serotype 2 (HAdV-2), this protein is Pre-hexon-linking protein IIIa.